A 122-amino-acid polypeptide reads, in one-letter code: Large ribosomal subunit protein uL14 (122 aa).

This sequence belongs to the universal ribosomal protein uL14 family. As to quaternary structure, part of the 50S ribosomal subunit. Forms a cluster with proteins L3 and L19. In the 70S ribosome, L14 and L19 interact and together make contacts with the 16S rRNA in bridges B5 and B8.

In terms of biological role, binds to 23S rRNA. Forms part of two intersubunit bridges in the 70S ribosome. This chain is Large ribosomal subunit protein uL14, found in Brucella abortus (strain 2308).